A 672-amino-acid chain; its full sequence is tRNA 5-methylaminomethyl-2-thiouridine biosynthesis bifunctional protein MnmC (672 aa).

The interval methionine 1 to glutamate 243 is tRNA (mnm(5)s(2)U34)-methyltransferase. Positions isoleucine 269–leucine 672 are FAD-dependent cmnm(5)s(2)U34 oxidoreductase.

The protein in the N-terminal section; belongs to the methyltransferase superfamily. tRNA (mnm(5)s(2)U34)-methyltransferase family. It in the C-terminal section; belongs to the DAO family. FAD is required as a cofactor.

It localises to the cytoplasm. The enzyme catalyses 5-aminomethyl-2-thiouridine(34) in tRNA + S-adenosyl-L-methionine = 5-methylaminomethyl-2-thiouridine(34) in tRNA + S-adenosyl-L-homocysteine + H(+). Catalyzes the last two steps in the biosynthesis of 5-methylaminomethyl-2-thiouridine (mnm(5)s(2)U) at the wobble position (U34) in tRNA. Catalyzes the FAD-dependent demodification of cmnm(5)s(2)U34 to nm(5)s(2)U34, followed by the transfer of a methyl group from S-adenosyl-L-methionine to nm(5)s(2)U34, to form mnm(5)s(2)U34. The protein is tRNA 5-methylaminomethyl-2-thiouridine biosynthesis bifunctional protein MnmC of Vibrio vulnificus (strain CMCP6).